A 146-amino-acid polypeptide reads, in one-letter code: MSYLVCGMIEYLMEQRSDIEADLKSIGYEVGIKLLELCNFEREVRISTLLYRATFDLLSLVSDSDRRVEKARDVDRTYLLTDSDGLFSRFISVPDEWNGLSADSIVCGMIQAALMASGYDSEVTAFPEPSENLPNRVIFQIRILDL.

The protein belongs to the TRAPP small subunits family. BET3 subfamily. As to quaternary structure, part of the multisubunit TRAPP (transport protein particle) complex.

The protein resides in the golgi apparatus. Its subcellular location is the cis-Golgi network. It is found in the endoplasmic reticulum. May play a role in vesicular transport from endoplasmic reticulum to Golgi. The chain is Putative trafficking protein particle complex subunit TRS31 (TRS31) from Encephalitozoon cuniculi (strain GB-M1) (Microsporidian parasite).